The chain runs to 354 residues: Quinone-reactive Ni/Fe-hydrogenase small chain (354 aa).

The tat-type signal signal peptide spans 1 to 36; that stretch reads MLEEKGIERRDFMKWAGAMTAMLSLPATFTPLTAKA. [4Fe-4S] cluster contacts are provided by Cys-53, Cys-56, Cys-153, Cys-186, His-224, Cys-227, Cys-252, and Cys-258. The [3Fe-4S] cluster site is built by Cys-267, Cys-286, and Cys-289.

It belongs to the [NiFe]/[NiFeSe] hydrogenase small subunit family. As to quaternary structure, heterodimer of a large and a small subunit. [4Fe-4S] cluster is required as a cofactor. [3Fe-4S] cluster serves as cofactor. Predicted to be exported by the Tat system. The position of the signal peptide cleavage has been experimentally proven.

The protein localises to the cell membrane. The catalysed reaction is H2 + a menaquinone = a menaquinol. This Wolinella succinogenes (strain ATCC 29543 / DSM 1740 / CCUG 13145 / JCM 31913 / LMG 7466 / NCTC 11488 / FDC 602W) (Vibrio succinogenes) protein is Quinone-reactive Ni/Fe-hydrogenase small chain (hydA).